The primary structure comprises 398 residues: Probable L-tyrosine/L-aspartate decarboxylase (398 aa).

Lys-242 bears the N6-(pyridoxal phosphate)lysine mark.

Belongs to the group II decarboxylase family. MfnA subfamily. Requires pyridoxal 5'-phosphate as cofactor.

The catalysed reaction is L-tyrosine + H(+) = tyramine + CO2. The enzyme catalyses L-aspartate + H(+) = beta-alanine + CO2. It functions in the pathway cofactor biosynthesis; methanofuran biosynthesis. It participates in cofactor biosynthesis; coenzyme A biosynthesis. Functionally, catalyzes the decarboxylation of L-tyrosine to produce tyramine for methanofuran biosynthesis. Can also catalyze the decarboxylation of L-aspartate to produce beta-alanine for coenzyme A (CoA) biosynthesis. The protein is Probable L-tyrosine/L-aspartate decarboxylase of Methanosarcina mazei (strain ATCC BAA-159 / DSM 3647 / Goe1 / Go1 / JCM 11833 / OCM 88) (Methanosarcina frisia).